A 144-amino-acid polypeptide reads, in one-letter code: 3-hydroxyacyl-[acyl-carrier-protein] dehydratase FabZ (144 aa).

H47 is an active-site residue.

Belongs to the thioester dehydratase family. FabZ subfamily.

Its subcellular location is the cytoplasm. The enzyme catalyses a (3R)-hydroxyacyl-[ACP] = a (2E)-enoyl-[ACP] + H2O. In terms of biological role, involved in unsaturated fatty acids biosynthesis. Catalyzes the dehydration of short chain beta-hydroxyacyl-ACPs and long chain saturated and unsaturated beta-hydroxyacyl-ACPs. The chain is 3-hydroxyacyl-[acyl-carrier-protein] dehydratase FabZ from Dechloromonas aromatica (strain RCB).